A 91-amino-acid chain; its full sequence is Small ribosomal subunit protein uS19 (91 aa).

This sequence belongs to the universal ribosomal protein uS19 family.

In terms of biological role, protein S19 forms a complex with S13 that binds strongly to the 16S ribosomal RNA. This is Small ribosomal subunit protein uS19 from Synechococcus sp. (strain WH7803).